Here is a 377-residue protein sequence, read N- to C-terminus: Putrescine transport ATP-binding protein PotG (377 aa).

Residues 20-250 form the ABC transporter domain; the sequence is LEIRNLTKSY…PTTRYSAEFI (231 aa). An ATP-binding site is contributed by 52-59; that stretch reads GASGCGKS.

Belongs to the ABC transporter superfamily. In terms of assembly, the complex is composed of two ATP-binding proteins (PotG), two transmembrane proteins (PotH and PotI) and a solute-binding protein (PotF).

The protein localises to the cell inner membrane. It carries out the reaction putrescine(out) + ATP + H2O = putrescine(in) + ADP + phosphate + H(+). Transport is feedback inhibited by intracellular polyamines. Its function is as follows. Part of the ABC transporter complex PotFGHI involved in putrescine uptake. Responsible for energy coupling to the transport system. Imports putrescine for maintenance of the optimal concentration of polyamines necessary for cell growth in the presence of glucose. The sequence is that of Putrescine transport ATP-binding protein PotG from Escherichia coli (strain K12).